The following is a 193-amino-acid chain: Interleukin-18 (193 aa).

The propeptide occupies 1 to 36; that stretch reads MAAEQVEDYCISFVEMKFINNTLYFVAENDEDLESD.

It belongs to the IL-1 family. In terms of assembly, forms a ternary complex with ligand-binding receptor subunit IL18R1 and signaling receptor subunit IL18RAP at the plasma membrane. Mature IL18 first binds to IL18R1 forming a low affinity binary complex, which then interacts with IL18RAP to form a high affinity ternary complex that signals inside the cell. Interacts with cargo receptor TMED10; the interaction mediates the translocation from the cytoplasm into the ERGIC (endoplasmic reticulum-Golgi intermediate compartment) and thereby secretion. In terms of processing, the pro-IL-18 precursor is processed by CASP1, CASP4 or CASP5 to yield its mature, active form. The pro-IL-18 precursor features autoinhibitory interactions between the propeptide and the post-cleavage-site region, preventing recognition by the IL18R1 receptor. Processing by CASP1, CASP4 or CASP5 induces conformational changes to generate critical receptor-binding sites. The mature form is then secreted and released in the extracellular milieu by passing through the gasdermin-D (GSDMD) pore. In contrast, cleavage by CASP3 inactivates IL18.

The protein localises to the cytoplasm. The protein resides in the cytosol. Its subcellular location is the secreted. Pro-inflammatory cytokine primarily involved in epithelial barrier repair, polarized T-helper 1 (Th1) cell and natural killer (NK) cell immune responses. Upon binding to IL18R1 and IL18RAP, forms a signaling ternary complex which activates NF-kappa-B, triggering synthesis of inflammatory mediators. Synergizes with IL12/interleukin-12 to induce IFNG synthesis from T-helper 1 (Th1) cells and natural killer (NK) cells. Involved in transduction of inflammation downstream of pyroptosis: its mature form is specifically released in the extracellular milieu by passing through the gasdermin-D (GSDMD) pore. The protein is Interleukin-18 (IL18) of Bos taurus (Bovine).